The sequence spans 382 residues: Galactose-1-phosphate uridylyltransferase (382 aa).

The Zn(2+) site is built by Cys52 and Cys55. UDP-alpha-D-glucose-binding positions include Ala61 and Asn77–Asp78. His121 serves as a coordination point for Zn(2+). Position 185 (Asn185) interacts with UDP-alpha-D-glucose. His196 provides a ligand contact to Zn(2+). His198 serves as the catalytic Tele-UMP-histidine intermediate. Gln200 serves as a coordination point for UDP-alpha-D-glucose. Residues Glu214, His313, His330, and His332 each contribute to the Fe cation site. Residues Lys345–Val348 and Phe350–Glu351 each bind UDP-alpha-D-glucose.

The protein belongs to the galactose-1-phosphate uridylyltransferase type 1 family. Homodimer. Zn(2+) is required as a cofactor.

The enzyme catalyses alpha-D-galactose 1-phosphate + UDP-alpha-D-glucose = alpha-D-glucose 1-phosphate + UDP-alpha-D-galactose. It functions in the pathway carbohydrate metabolism; galactose metabolism. In terms of biological role, essential for growth on galactose but not for cellulase induction. This Hypocrea jecorina (Trichoderma reesei) protein is Galactose-1-phosphate uridylyltransferase (gal7).